Here is a 125-residue protein sequence, read N- to C-terminus: Egg cell-secreted protein 1.3 (125 aa).

A signal peptide spans 1 to 24 (MASNTSFLFVTVTLLLVLNVSSRA).

It belongs to the plant egg cell-secreted peptide family. In terms of tissue distribution, restricted to female reproductive tissues, specifically accumulating in storage vesicles of the unfertilized egg cell.

It is found in the cytoplasmic vesicle. It localises to the secreted. In terms of biological role, involved in the regulation of gamete interactions during the double fertilization and to prevent multiple-pollen tube attraction; mediates the redistribution of the gamete fusogen HAP2/GCS1 to the cell surface after secretion upon sperm arrival. The polypeptide is Egg cell-secreted protein 1.3 (EC1.3) (Arabidopsis thaliana (Mouse-ear cress)).